The primary structure comprises 116 residues: Ribosome-binding factor A (116 aa).

It belongs to the RbfA family. Monomer. Binds 30S ribosomal subunits, but not 50S ribosomal subunits or 70S ribosomes.

The protein localises to the cytoplasm. One of several proteins that assist in the late maturation steps of the functional core of the 30S ribosomal subunit. Associates with free 30S ribosomal subunits (but not with 30S subunits that are part of 70S ribosomes or polysomes). Required for efficient processing of 16S rRNA. May interact with the 5'-terminal helix region of 16S rRNA. The chain is Ribosome-binding factor A from Levilactobacillus brevis (strain ATCC 367 / BCRC 12310 / CIP 105137 / JCM 1170 / LMG 11437 / NCIMB 947 / NCTC 947) (Lactobacillus brevis).